A 551-amino-acid polypeptide reads, in one-letter code: Glucans biosynthesis protein D (551 aa).

The segment at residues 1 to 32 is a signal peptide (tat-type signal); that stretch reads MNRRRFIKGSMAMAAVCGSSGIASLFSQAAFA.

Belongs to the OpgD/OpgG family. In terms of processing, predicted to be exported by the Tat system. The position of the signal peptide cleavage has not been experimentally proven.

Its subcellular location is the periplasm. It participates in glycan metabolism; osmoregulated periplasmic glucan (OPG) biosynthesis. In terms of biological role, probably involved in the control of the structural glucose backbone of osmoregulated periplasmic glucans (OPGs). The polypeptide is Glucans biosynthesis protein D (Salmonella paratyphi A (strain ATCC 9150 / SARB42)).